The sequence spans 358 residues: S-adenosylmethionine:tRNA ribosyltransferase-isomerase (358 aa).

This sequence belongs to the QueA family. Monomer.

It is found in the cytoplasm. The enzyme catalyses 7-aminomethyl-7-carbaguanosine(34) in tRNA + S-adenosyl-L-methionine = epoxyqueuosine(34) in tRNA + adenine + L-methionine + 2 H(+). Its pathway is tRNA modification; tRNA-queuosine biosynthesis. Its function is as follows. Transfers and isomerizes the ribose moiety from AdoMet to the 7-aminomethyl group of 7-deazaguanine (preQ1-tRNA) to give epoxyqueuosine (oQ-tRNA). The sequence is that of S-adenosylmethionine:tRNA ribosyltransferase-isomerase from Desulfotalea psychrophila (strain LSv54 / DSM 12343).